The following is a 233-amino-acid chain: Favin (233 aa).

Residues glutamate 120 and aspartate 122 each coordinate Mn(2+). Ca(2+) is bound by residues aspartate 122, phenylalanine 124, asparagine 126, and aspartate 130. Aspartate 130 and histidine 137 together coordinate Mn(2+). Residue asparagine 168 is glycosylated (N-linked (GlcNAc...) asparagine).

The protein belongs to the leguminous lectin family. As to quaternary structure, heterodimer of an alpha and a beta chain.

This chain is Favin, found in Vicia faba (Broad bean).